The following is a 101-amino-acid chain: Large ribosomal subunit protein eL21 (101 aa).

Residues 1-18 show a composition bias toward basic residues; that stretch reads MVKHSRGYRTRSRSLLRK. Residues 1–23 form a disordered region; it reads MVKHSRGYRTRSRSLLRKSPRER.

Belongs to the eukaryotic ribosomal protein eL21 family.

This is Large ribosomal subunit protein eL21 from Saccharolobus islandicus (strain Y.N.15.51 / Yellowstone #2) (Sulfolobus islandicus).